The chain runs to 176 residues: NAD(P)H-quinone oxidoreductase subunit 6, chloroplastic (176 aa).

The next 5 membrane-spanning stretches (helical) occupy residues 10–30, 32–52, 61–81, 95–115, and 152–172; these read FLLVFLGLGLILGGLGVVLLT, PIYSAFSLGLVLVCISLFYIL, AQLLIYVGAINVLIIFAVMFM, VGSGVTSLVCTSIFVSLITII, and FFLPFEFISIILLVALIGAIA.

This sequence belongs to the complex I subunit 6 family. As to quaternary structure, NDH is composed of at least 16 different subunits, 5 of which are encoded in the nucleus.

The protein localises to the plastid. It localises to the chloroplast thylakoid membrane. It catalyses the reaction a plastoquinone + NADH + (n+1) H(+)(in) = a plastoquinol + NAD(+) + n H(+)(out). The catalysed reaction is a plastoquinone + NADPH + (n+1) H(+)(in) = a plastoquinol + NADP(+) + n H(+)(out). Its function is as follows. NDH shuttles electrons from NAD(P)H:plastoquinone, via FMN and iron-sulfur (Fe-S) centers, to quinones in the photosynthetic chain and possibly in a chloroplast respiratory chain. The immediate electron acceptor for the enzyme in this species is believed to be plastoquinone. Couples the redox reaction to proton translocation, and thus conserves the redox energy in a proton gradient. The sequence is that of NAD(P)H-quinone oxidoreductase subunit 6, chloroplastic (ndhG) from Manihot esculenta (Cassava).